Reading from the N-terminus, the 136-residue chain is Large ribosomal subunit protein uL16 (136 aa).

This sequence belongs to the universal ribosomal protein uL16 family. As to quaternary structure, part of the 50S ribosomal subunit.

In terms of biological role, binds 23S rRNA and is also seen to make contacts with the A and possibly P site tRNAs. This chain is Large ribosomal subunit protein uL16, found in Shewanella baltica (strain OS155 / ATCC BAA-1091).